The chain runs to 990 residues: Serine/threonine-protein phosphatase 6 regulatory ankyrin repeat subunit B (990 aa).

28 ANK repeats span residues 7 to 36, 40 to 69, 73 to 102, 106 to 135, 139 to 168, 172 to 201, 205 to 234, 238 to 267, 271 to 301, 305 to 334, 338 to 367, 371 to 400, 404 to 433, 437 to 466, 470 to 499, 531 to 560, 566 to 595, 599 to 628, 633 to 662, 666 to 695, 699 to 728, 732 to 761, 768 to 797, 800 to 829, 835 to 864, 868 to 898, 902 to 931, and 938 to 967; these read ADQP…DVNA, EKRT…RVNA, MWLT…DVNA, NWQT…SVNV, GGRT…NINA, KDRR…EVTC, KGYT…EIDE, YGNT…NVNQ, NGFT…DVNI, DGKS…EIDC, DGNT…DTAK, HNMF…EIDT, FGRT…DFNK, RGRT…NINE, WGRT…NAEE, EGYN…NMFE, ATKS…DLDI, KGRT…SVTV, TKRT…NPDV, KGQT…SVDA, LGCT…SILC, RGRT…SEED, QGYT…FRKF, NSFS…ASIV, KGRT…QVNA, AGKT…DLTL, DSNT…EQSL, and SLQT…CVLA.

In terms of assembly, protein phosphatase 6 (PP6) holoenzyme is proposed to be a heterotrimeric complex formed by the catalytic subunit, a SAPS domain-containing subunit (PP6R) and an ankyrin repeat-domain containing regulatory subunit (ARS).

Its function is as follows. Putative regulatory subunit of protein phosphatase 6 (PP6) that may be involved in the recognition of phosphoprotein substrates. The polypeptide is Serine/threonine-protein phosphatase 6 regulatory ankyrin repeat subunit B (ANKRD44) (Gallus gallus (Chicken)).